Consider the following 194-residue polypeptide: Methyl-CpG-binding domain protein 3-like 1 (194 aa).

Positions 1-104 are transcription repressor; sequence MAKSSQRKQR…KLVPSYTGGS (104 aa).

Belongs to the MBD3L family. In terms of tissue distribution, highly expressed in testis. Detected at low levels in pancreas. Not detected in the other tissues tested.

Its subcellular location is the nucleus. Its function is as follows. Transcriptional repressor. The sequence is that of Methyl-CpG-binding domain protein 3-like 1 (MBD3L1) from Homo sapiens (Human).